The following is a 116-amino-acid chain: Small ribosomal subunit protein bS16 (116 aa).

The protein belongs to the bacterial ribosomal protein bS16 family.

The sequence is that of Small ribosomal subunit protein bS16 from Chlamydia muridarum (strain MoPn / Nigg).